The following is a 254-amino-acid chain: Homeobox protein Nkx-6.3 (254 aa).

Disordered regions lie at residues 112 to 140 and 191 to 228; these read QDWRGGNPALSSASNTEGSSRKKHTRPTF and KSAVETPGLPSLSTRAPGDLIPSDNEDDEYSKPLDPDS. Residues 120–129 are compositionally biased toward polar residues; the sequence is ALSSASNTEG. The segment at residues 133–192 is a DNA-binding region (homeobox); sequence KKHTRPTFTGHQIFALEKTFEQTKYLAGPERARLAFSLGMSESQVKVWFQNRRTKWRKKS.

It localises to the nucleus. Functionally, putative transcription factor, which may be involved in patterning of central nervous system and pancreas. The protein is Homeobox protein Nkx-6.3 (nkx6-3) of Xenopus laevis (African clawed frog).